The primary structure comprises 1024 residues: Myosin phosphatase Rho-interacting protein (1024 aa).

The interaction with F-actin stretch occupies residues 1–382 (MSAAKENPCR…DRRSTESSMT (382 aa)). In terms of domain architecture, PH 1 spans 43-150 (KPIYGGWLLL…WLEMLMVYPR (108 aa)). The segment at 152–262 (NKQNQKKKRK…GDRVDGGRKV (111 aa)) is disordered. The segment covering 179–190 (SSSGGSSGSSSS) has biased composition (low complexity). A phosphoserine mark is found at Ser-193, Ser-219, Ser-221, Ser-225, and Ser-227. The span at 221 to 233 (SPAQSPSQSQPPA) shows a compositional bias: low complexity. The span at 240-262 (PGLESKEDESTISGDRVDGGRKV) shows a compositional bias: basic and acidic residues. Ser-266, Ser-270, Ser-289, and Ser-292 each carry phosphoserine. 2 disordered regions span residues 274 to 301 (AKQD…SRRS) and 328 to 379 (PSSD…STES). Thr-295 carries the phosphothreonine modification. Positions 333–349 (RQGRSERRAIPRKRDFA) are enriched in basic and acidic residues. Ser-364 carries the post-translational modification Phosphoserine. The region spanning 386 to 482 (LNFKKGWLTK…WIQTIMKHVL (97 aa)) is the PH 2 domain. Residues 486–583 (APDVTSSLPE…AEPGELERER (98 aa)) form a disordered region. A compositionally biased stretch (polar residues) spans 488–508 (DVTSSLPEGKNKSTSFETCSR). Ser-492 carries the phosphoserine modification. Over residues 522–545 (PEQKKSRARERRREGRSKTFDWAE) the composition is skewed to basic and acidic residues. The interval 545 to 823 (EFRPIQQALA…SVQRELEVLS (279 aa)) is interaction with RHOA. Ser-617 carries the phosphoserine modification. The residue at position 645 (Thr-645) is a Phosphothreonine. Residues 672-976 (HELTSLLEKE…AATEALGEKS (305 aa)) adopt a coiled-coil conformation. Ser-799 carries the post-translational modification Phosphoserine. The interaction with PPP1R12A stretch occupies residues 823–878 (SEQYSQKCLENAHLAQALEAERQALRQCQRENQELNAHNQELNNRLAAEITRLRTL). Positions 972–995 (LGEKSPEGTTVSGYDIMKSKSNPD) are disordered. Phosphoserine occurs at positions 976, 979, 992, 1013, and 1015.

In terms of assembly, binds RHOA, PPP1R12A/MBS and PPP1R12C/MBS85 through adjacent coiled coil domains. Interacts with MYZAP. Binds F-actin through its N-terminus. Expressed in Kidney, Brain, Heart and Lung.

The protein localises to the cytoplasm. It is found in the cytoskeleton. Functionally, targets myosin phosphatase to the actin cytoskeleton. Required for the regulation of the actin cytoskeleton by RhoA and ROCK1. Depletion leads to an increased number of stress fibers in smooth muscle cells through stabilization of actin fibers by phosphorylated myosin. Overexpression of MRIP as well as its F-actin-binding region leads to disassembly of stress fibers in neuronal cells. This Mus musculus (Mouse) protein is Myosin phosphatase Rho-interacting protein (Mprip).